Here is a 399-residue protein sequence, read N- to C-terminus: Acetate kinase (399 aa).

Asn-7 serves as a coordination point for Mg(2+). Lys-14 is an ATP binding site. Position 89 (Arg-89) interacts with substrate. The active-site Proton donor/acceptor is Asp-146. ATP contacts are provided by residues 206–210 (HIGSG), 280–282 (DFR), and 328–332 (GIGEN). Glu-382 is a binding site for Mg(2+).

It belongs to the acetokinase family. As to quaternary structure, homodimer. Mg(2+) is required as a cofactor. Mn(2+) serves as cofactor.

Its subcellular location is the cytoplasm. The catalysed reaction is acetate + ATP = acetyl phosphate + ADP. It functions in the pathway metabolic intermediate biosynthesis; acetyl-CoA biosynthesis; acetyl-CoA from acetate: step 1/2. In terms of biological role, catalyzes the formation of acetyl phosphate from acetate and ATP. Can also catalyze the reverse reaction. This Campylobacter hominis (strain ATCC BAA-381 / DSM 21671 / CCUG 45161 / LMG 19568 / NCTC 13146 / CH001A) protein is Acetate kinase.